A 516-amino-acid polypeptide reads, in one-letter code: MQFALALDTNSGPHQIRSCEGDGIDRLEKLSIGGRKQEKALRNRCFGGRVAATTQCILTSDACPETLHSQTQSSRKNYADANRVSAIILGGGTGSQLFPLTSTRATPAVPVGGCYRLIDIPMSNCFNSGINKIFVMSQFNSTSLNRHIHRTYLEGGINFADGSVQVLAATQMPEEPAGWFQGTADSIRKFIWVLEDYYSHKSIDNIVILSGDQLYRMNYMELVQKHVEDDADITISCAPVDESRASKNGLVKIDHTGRVLQFFEKPKGADLNSMRVETNFLSYAIDDAQKYPYLASMGIYVFKKDALLDLLKSKYTQLHDFGSEILPRAVLDHSVQACIFTGYWEDVGTIKSFFDANLALTEQPSKFDFYDPKTPFFTAPRCLPPTQLDKCKMKYAFISDGCLLRECNIEHSVIGVCSRVSSGCELKDSVMMGADTYETEEEASKLLLAGKVPVGIGRNTKIRNCIIDMNARIGKNVVITNSKGIQEADHPEEGYYIRSGIVVILKNATINDGSVI.

The transit peptide at 1-45 (MQFALALDTNSGPHQIRSCEGDGIDRLEKLSIGGRKQEKALRNRC) directs the protein to the chloroplast.

It belongs to the bacterial/plant glucose-1-phosphate adenylyltransferase family. As to quaternary structure, heterotetramer. Endosperm.

It localises to the plastid. The protein localises to the chloroplast. Its subcellular location is the amyloplast. The enzyme catalyses alpha-D-glucose 1-phosphate + ATP + H(+) = ADP-alpha-D-glucose + diphosphate. The protein operates within glycan biosynthesis; starch biosynthesis. Activated by 3'phosphoglycerate, inhibited by orthophosphate. Allosteric regulation. This protein plays a role in synthesis of starch. It catalyzes the synthesis of the activated glycosyl donor, ADP-glucose from Glc-1-P and ATP. This Zea mays (Maize) protein is Glucose-1-phosphate adenylyltransferase large subunit 1, chloroplastic/amyloplastic (SH2).